Here is a 1132-residue protein sequence, read N- to C-terminus: Phosphatidylinositide phosphatase SAC2 (1132 aa).

Residues 167–518 form the SAC domain; it reads LKMFMDSESF…GDSISRQYAG (352 aa). The segment at 250-269 is disordered; that stretch reads ESSDDDKSSPETPPQDSTCV. Residues 593-760 form the hSac2 domain; the sequence is RSHQELISQL…KSSKPHEDII (168 aa). Phosphoserine occurs at positions 714, 827, and 830. Residues 833-872 form a disordered region; sequence TMENPGVMGNKVQGESDGDISSDNDSYHSDEFLTNSKSEE. The segment covering 857–872 has biased composition (basic and acidic residues); sequence DSYHSDEFLTNSKSEE. Residues serine 879, serine 882, serine 908, and serine 911 each carry the phosphoserine modification. Polar residues-rich tracts occupy residues 908 to 918 and 994 to 1005; these read SASSIDVSTHA and RVSNEETQSEPM. 2 disordered regions span residues 908–951 and 981–1016; these read SASS…HTRT and VAQK…SQLN. At serine 1103 the chain carries Phosphoserine.

Homodimer. Interacts with OCRL and RAB5. Interacts with INPP5B and INPP4A. Interacts with STAT3; the interaction is independent of STAT3 'Tyr-705' phosphorylation status. As to expression, highly expressed in brain and hypothalamus, expressed in lung and pancreas, and detected at low levels in liver and heart (at protein level).

The protein resides in the membrane. It localises to the clathrin-coated pit. It is found in the early endosome. Its subcellular location is the recycling endosome. It catalyses the reaction a myo-inositol phosphate + H2O = myo-inositol + phosphate. In terms of biological role, inositol 4-phosphatase which mainly acts on phosphatidylinositol 4-phosphate. May be functionally linked to OCRL, which converts phosphatidylinositol 4,5-bisphosphate to phosphatidylinositol, for a sequential dephosphorylation of phosphatidylinositol 4,5-bisphosphate at the 5 and 4 position of inositol, thus playing an important role in the endocytic recycling. Regulator of TF:TFRC and integrins recycling pathway, is also involved in cell migration mechanisms. Modulates AKT/GSK3B pathway by decreasing AKT and GSK3B phosphorylation. Negatively regulates STAT3 signaling pathway through inhibition of STAT3 phosphorylation and translocation to the nucleus. Functionally important modulator of cardiac myocyte size and of the cardiac response to stress. May play a role as negative regulator of axon regeneration after central nervous system injuries. The chain is Phosphatidylinositide phosphatase SAC2 from Mus musculus (Mouse).